Reading from the N-terminus, the 479-residue chain is uncharacterized protein (479 aa).

The segment at 180 to 203 (LGGEHSDSTNTELANPSSTTTRIT) is disordered. Positions 187 to 202 (STNTELANPSSTTTRI) are enriched in polar residues. Residues 240–462 (PGTTPEVVSY…LKPLVDAGYS (223 aa)) form the PE-PPE domain.

It belongs to the mycobacterial PPE family.

This is an uncharacterized protein from Mycobacterium tuberculosis (strain CDC 1551 / Oshkosh).